The following is a 109-amino-acid chain: U26-theraphotoxin-Cg1b (109 aa).

A signal peptide spans 1–18; it reads MNTIIPLLLLSLLITVYA. The propeptide occupies 19–67; that stretch reads YALEDGNKEEMQDIAESEFEASNEMLQLAHLLEADRAETEEDRNSRQKR. 3 disulfides stabilise this stretch: Cys-68/Cys-83, Cys-75/Cys-88, and Cys-82/Cys-103.

The protein belongs to the neurotoxin 14 (magi-1) family. 07 (Jztx-56) subfamily. In terms of tissue distribution, expressed by the venom gland.

The protein localises to the secreted. Its function is as follows. Probable ion channel inhibitor. The sequence is that of U26-theraphotoxin-Cg1b from Chilobrachys guangxiensis (Chinese earth tiger tarantula).